Here is a 460-residue protein sequence, read N- to C-terminus: Telomere-binding protein homolog (460 aa).

Belongs to the telombin family.

The protein localises to the nucleus. Its subcellular location is the chromosome. It is found in the telomere. May bind telomeric T4G4 sequences. The protein is Telomere-binding protein homolog of Euplotes crassus.